We begin with the raw amino-acid sequence, 139 residues long: Small ribosomal subunit protein uS12 (139 aa).

D102 bears the 3-methylthioaspartic acid mark.

It belongs to the universal ribosomal protein uS12 family. As to quaternary structure, part of the 30S ribosomal subunit. Contacts proteins S8 and S17. May interact with IF1 in the 30S initiation complex.

With S4 and S5 plays an important role in translational accuracy. Its function is as follows. Interacts with and stabilizes bases of the 16S rRNA that are involved in tRNA selection in the A site and with the mRNA backbone. Located at the interface of the 30S and 50S subunits, it traverses the body of the 30S subunit contacting proteins on the other side and probably holding the rRNA structure together. The combined cluster of proteins S8, S12 and S17 appears to hold together the shoulder and platform of the 30S subunit. The polypeptide is Small ribosomal subunit protein uS12 (Bacillus pumilus (strain SAFR-032)).